Consider the following 417-residue polypeptide: Bifunctional thiamine biosynthesis protein ThiDN (417 aa).

A hydroxymethylpyrimidine/phosphomethylpyrimidine kinase region spans residues 1-235; that stretch reads MVILAIGGYD…KSKFGYNSNP (235 aa). Residue Q41 participates in 4-amino-5-hydroxymethyl-2-methylpyrimidine binding. The segment at 236–417 is thiamine-phosphate synthase; the sequence is TYINKEKVIK…VIQKIYNTLM (182 aa).

It in the N-terminal section; belongs to the ThiD family. This sequence in the C-terminal section; belongs to the ThiN family.

The catalysed reaction is 4-amino-5-hydroxymethyl-2-methylpyrimidine + ATP = 4-amino-2-methyl-5-(phosphooxymethyl)pyrimidine + ADP + H(+). It carries out the reaction 4-amino-2-methyl-5-(phosphooxymethyl)pyrimidine + ATP = 4-amino-2-methyl-5-(diphosphooxymethyl)pyrimidine + ADP. The enzyme catalyses 2-[(2R,5Z)-2-carboxy-4-methylthiazol-5(2H)-ylidene]ethyl phosphate + 4-amino-2-methyl-5-(diphosphooxymethyl)pyrimidine + 2 H(+) = thiamine phosphate + CO2 + diphosphate. It catalyses the reaction 2-(2-carboxy-4-methylthiazol-5-yl)ethyl phosphate + 4-amino-2-methyl-5-(diphosphooxymethyl)pyrimidine + 2 H(+) = thiamine phosphate + CO2 + diphosphate. The catalysed reaction is 4-methyl-5-(2-phosphooxyethyl)-thiazole + 4-amino-2-methyl-5-(diphosphooxymethyl)pyrimidine + H(+) = thiamine phosphate + diphosphate. It functions in the pathway cofactor biosynthesis; thiamine diphosphate biosynthesis; 4-amino-2-methyl-5-diphosphomethylpyrimidine from 5-amino-1-(5-phospho-D-ribosyl)imidazole. Its pathway is cofactor biosynthesis; thiamine diphosphate biosynthesis; thiamine phosphate from 4-amino-2-methyl-5-diphosphomethylpyrimidine and 4-methyl-5-(2-phosphoethyl)-thiazole: step 1/1. Catalyzes the phosphorylation of hydroxymethylpyrimidine phosphate (HMP-P) to HMP-PP, and of HMP to HMP-P. In terms of biological role, condenses 4-methyl-5-(beta-hydroxyethyl)thiazole monophosphate (THZ-P) and 4-amino-5-hydroxymethyl pyrimidine pyrophosphate (HMP-PP) to form thiamine monophosphate (TMP). This chain is Bifunctional thiamine biosynthesis protein ThiDN (thiDN), found in Methanocaldococcus jannaschii (strain ATCC 43067 / DSM 2661 / JAL-1 / JCM 10045 / NBRC 100440) (Methanococcus jannaschii).